We begin with the raw amino-acid sequence, 245 residues long: Hydrolase pyvD (245 aa).

Active-site residues include Cys-133, Asp-179, and His-211.

Belongs to the dienelactone hydrolase family.

The protein operates within secondary metabolite biosynthesis. Its function is as follows. Hydrolase; part of the gene cluster that mediates the biosynthesis of pyranoviolin A, a pyranonigrin analog with a C-3 methoxy group. Initially, the PKS portion of pyvA synthesizes C-10 carbon chain from 5 molecules of malonyl-CoA, which is then condensed with the thiolation (T) domain-bound glycine activated by the adenylation (A) domain. The subsequent chain release by Dieckmann condensation (DKC) could be catalyzed by the TE domain present at the C-terminus of pyvA and/or the alpha/beta hydrolase pyvD, installing the tetramic acid moiety. The FAD-dependent monooxygenase pyvC next epoxidizes one of the olefins of the polyketide part, and the epoxide ring-opening induces the dihydro-gamma-pyrone ring formation. The cytochrome P450 monooxygeanse pyvB would be responsible for the 2 consecutive reactions, in which the dihydro-gamma-pyrone is oxidized to gamma-pyrone and C-7 is hydroxylated to yield pyranonigrin F. Finally, the O-methyltransferase pyvH methylates the C-3 hydroxy group to complete the biosynthesis. This Aspergillus violaceofuscus (strain CBS 115571) protein is Hydrolase pyvD.